The primary structure comprises 315 residues: Small ribosomal subunit biogenesis GTPase RsgA (315 aa).

Positions 82–246 (DQFKSKVLAA…LIDSPGFQEF (165 aa)) constitute a CP-type G domain. Residues 130–133 (NKID) and 184–192 (GQSGMGKSS) contribute to the GTP site. Zn(2+) is bound by residues Cys-270, Cys-275, His-277, and Cys-283.

The protein belongs to the TRAFAC class YlqF/YawG GTPase family. RsgA subfamily. Monomer. Associates with 30S ribosomal subunit, binds 16S rRNA. Zn(2+) serves as cofactor.

It is found in the cytoplasm. Its function is as follows. One of several proteins that assist in the late maturation steps of the functional core of the 30S ribosomal subunit. Helps release RbfA from mature subunits. May play a role in the assembly of ribosomal proteins into the subunit. Circularly permuted GTPase that catalyzes slow GTP hydrolysis, GTPase activity is stimulated by the 30S ribosomal subunit. This chain is Small ribosomal subunit biogenesis GTPase RsgA, found in Ralstonia pickettii (strain 12J).